We begin with the raw amino-acid sequence, 145 residues long: tRNA-specific adenosine deaminase (145 aa).

One can recognise a CMP/dCMP-type deaminase domain in the interval Met1 to Ala116. A Zn(2+)-binding site is contributed by His48. Residue Glu50 is the Proton donor of the active site. Residues Cys78 and Cys81 each contribute to the Zn(2+) site.

Belongs to the cytidine and deoxycytidylate deaminase family. As to quaternary structure, homodimer. Zn(2+) is required as a cofactor.

The enzyme catalyses adenosine(34) in tRNA + H2O + H(+) = inosine(34) in tRNA + NH4(+). In terms of biological role, catalyzes the deamination of adenosine to inosine at the wobble position 34 of tRNA(Arg2). This is tRNA-specific adenosine deaminase from Rickettsia bellii (strain RML369-C).